A 241-amino-acid chain; its full sequence is MRVVVSIGGSVLAPNLDARRVEDHAAVVETLAEAGYDIAAVVGGGGVARDYIGTARDLGANEVQLDQIGIDVTRINARLLIAALGSRVDPKVARDYEDAGDAVRRGDISIMGGIMPGQTTDAVAAALAEYVDADLLVYATSVDGVYDADPSSQDEAQKYTQLLPTELVDVVAPMSRDAGASAPVDLLAAKLIQRAGMRTIVLDGADPQHIESAVLDGEHNGTDIIPPDGKDDLATWVHAEQ.

9 to 10 (GS) lines the ATP pocket. Glycine 44 provides a ligand contact to UMP. The ATP site is built by glycine 45 and arginine 49. UMP contacts are provided by residues aspartate 66 and 114–120 (IMPGQTT). ATP is bound by residues threonine 140, tyrosine 146, and aspartate 149.

This sequence belongs to the UMP kinase family. As to quaternary structure, homohexamer.

The protein resides in the cytoplasm. It carries out the reaction UMP + ATP = UDP + ADP. Its pathway is pyrimidine metabolism; CTP biosynthesis via de novo pathway; UDP from UMP (UMPK route): step 1/1. With respect to regulation, inhibited by UTP. In terms of biological role, catalyzes the reversible phosphorylation of UMP to UDP. In Haloquadratum walsbyi (strain DSM 16790 / HBSQ001), this protein is Uridylate kinase.